We begin with the raw amino-acid sequence, 473 residues long: Photosystem II CP43 reaction center protein (473 aa).

A propeptide spanning residues 1-14 (MKTLYSLRRFYPVE) is cleaved from the precursor. Thr15 is subject to N-acetylthreonine. Residue Thr15 is modified to Phosphothreonine. The next 5 membrane-spanning stretches (helical) occupy residues 69–93 (LFEVAHFVPEKPMYEQGLILLPHLA), 134–155 (LLGPETLEESFPFFGYVWKDRN), 178–200 (KALYFGGVYDTWAPGGGDVRKIT), 255–275 (KPFAWARRALVWSGEAYLSYS), and 291–312 (WFNNTAYPSEFYGPTGPEASQA). Residue Glu367 coordinates [CaMn4O5] cluster. Residues 447–471 (RARAAAAGFEKGIDRDFEPVLSMTP) traverse the membrane as a helical segment.

This sequence belongs to the PsbB/PsbC family. PsbC subfamily. In terms of assembly, PSII is composed of 1 copy each of membrane proteins PsbA, PsbB, PsbC, PsbD, PsbE, PsbF, PsbH, PsbI, PsbJ, PsbK, PsbL, PsbM, PsbT, PsbX, PsbY, PsbZ, Psb30/Ycf12, at least 3 peripheral proteins of the oxygen-evolving complex and a large number of cofactors. It forms dimeric complexes. The cofactor is Binds multiple chlorophylls and provides some of the ligands for the Ca-4Mn-5O cluster of the oxygen-evolving complex. It may also provide a ligand for a Cl- that is required for oxygen evolution. PSII binds additional chlorophylls, carotenoids and specific lipids..

The protein resides in the plastid. It is found in the chloroplast thylakoid membrane. One of the components of the core complex of photosystem II (PSII). It binds chlorophyll and helps catalyze the primary light-induced photochemical processes of PSII. PSII is a light-driven water:plastoquinone oxidoreductase, using light energy to abstract electrons from H(2)O, generating O(2) and a proton gradient subsequently used for ATP formation. The polypeptide is Photosystem II CP43 reaction center protein (Daucus carota (Wild carrot)).